The following is a 156-amino-acid chain: Endoribonuclease YbeY (156 aa).

Zn(2+) contacts are provided by His122, His126, and His132.

It belongs to the endoribonuclease YbeY family. Requires Zn(2+) as cofactor.

It is found in the cytoplasm. In terms of biological role, single strand-specific metallo-endoribonuclease involved in late-stage 70S ribosome quality control and in maturation of the 3' terminus of the 16S rRNA. The protein is Endoribonuclease YbeY of Symbiobacterium thermophilum (strain DSM 24528 / JCM 14929 / IAM 14863 / T).